Consider the following 206-residue polypeptide: Adenylyl-sulfate kinase (206 aa).

36–43 (GLSGSGKS) lines the ATP pocket. S110 functions as the Phosphoserine intermediate in the catalytic mechanism.

The protein belongs to the APS kinase family.

The enzyme catalyses adenosine 5'-phosphosulfate + ATP = 3'-phosphoadenylyl sulfate + ADP + H(+). It participates in sulfur metabolism; hydrogen sulfide biosynthesis; sulfite from sulfate: step 2/3. In terms of biological role, catalyzes the synthesis of activated sulfate. The chain is Adenylyl-sulfate kinase (cysC) from Buchnera aphidicola subsp. Acyrthosiphon pisum (strain APS) (Acyrthosiphon pisum symbiotic bacterium).